The following is a 240-amino-acid chain: 6-phosphogluconolactonase (240 aa).

Belongs to the glucosamine/galactosamine-6-phosphate isomerase family. 6-phosphogluconolactonase subfamily.

The catalysed reaction is 6-phospho-D-glucono-1,5-lactone + H2O = 6-phospho-D-gluconate + H(+). It functions in the pathway carbohydrate degradation; pentose phosphate pathway; D-ribulose 5-phosphate from D-glucose 6-phosphate (oxidative stage): step 2/3. Hydrolysis of 6-phosphogluconolactone to 6-phosphogluconate. This chain is 6-phosphogluconolactonase (pgl), found in Synechocystis sp. (strain ATCC 27184 / PCC 6803 / Kazusa).